Here is a 114-residue protein sequence, read N- to C-terminus: MHILDSVDKASLRSDIPDFRAGDTVKVHVNIVEGSRSRIQVFQGIVIGRQGEGVRETFCVRKVSFQVGVERTFPVHSPVIDHIEVVTRGDVRRAKLYFLRDLRGKKAKIKEKRS.

The protein belongs to the bacterial ribosomal protein bL19 family.

This protein is located at the 30S-50S ribosomal subunit interface and may play a role in the structure and function of the aminoacyl-tRNA binding site. This is Large ribosomal subunit protein bL19 from Clavibacter sepedonicus (Clavibacter michiganensis subsp. sepedonicus).